Here is a 109-residue protein sequence, read N- to C-terminus: Cell division protein ZapA (109 aa).

The stretch at 22–99 (EQQDALNMAA…IEQALLEQGR (78 aa)) forms a coiled coil.

This sequence belongs to the ZapA family. Type 1 subfamily. In terms of assembly, homodimer. Interacts with FtsZ.

It localises to the cytoplasm. Functionally, activator of cell division through the inhibition of FtsZ GTPase activity, therefore promoting FtsZ assembly into bundles of protofilaments necessary for the formation of the division Z ring. It is recruited early at mid-cell but it is not essential for cell division. In Yersinia pseudotuberculosis serotype O:1b (strain IP 31758), this protein is Cell division protein ZapA.